The chain runs to 73 residues: Putative membrane protein insertion efficiency factor (73 aa).

The protein belongs to the UPF0161 family.

The protein resides in the cell inner membrane. Its function is as follows. Could be involved in insertion of integral membrane proteins into the membrane. The chain is Putative membrane protein insertion efficiency factor from Parabacteroides distasonis (strain ATCC 8503 / DSM 20701 / CIP 104284 / JCM 5825 / NCTC 11152).